The chain runs to 241 residues: Uridylate kinase (241 aa).

Residue 15-18 (KISG) coordinates ATP. An involved in allosteric activation by GTP region spans residues 23-28 (GDQGFG). Gly-57 contacts UMP. Gly-58 and Arg-62 together coordinate ATP. UMP is bound by residues Asp-77 and 138 to 145 (TGNPYFTT). The ATP site is built by Thr-165, Tyr-171, and Asp-174.

Belongs to the UMP kinase family. In terms of assembly, homohexamer.

The protein resides in the cytoplasm. It catalyses the reaction UMP + ATP = UDP + ADP. It participates in pyrimidine metabolism; CTP biosynthesis via de novo pathway; UDP from UMP (UMPK route): step 1/1. Its activity is regulated as follows. Allosterically activated by GTP. Inhibited by UTP. In terms of biological role, catalyzes the reversible phosphorylation of UMP to UDP. The protein is Uridylate kinase of Paracoccus zeaxanthinifaciens.